A 136-amino-acid chain; its full sequence is FK506-binding protein 2 (136 aa).

Residues 1 to 17 (MLSQIWILFTFMVCVIA) form the signal peptide. A PPIase FKBP-type domain is found at 45-134 (GDMVSVHYTG…DFDVELVDIA (90 aa)).

Belongs to the FKBP-type PPIase family. FKBP2 subfamily.

The protein localises to the endoplasmic reticulum. The enzyme catalyses [protein]-peptidylproline (omega=180) = [protein]-peptidylproline (omega=0). Inhibited by both FK506 and rapamycin. Functionally, PPIases accelerate the folding of proteins. It catalyzes the cis-trans isomerization of proline imidic peptide bonds in oligopeptides. The protein is FK506-binding protein 2 (FPR2) of Candida glabrata (strain ATCC 2001 / BCRC 20586 / JCM 3761 / NBRC 0622 / NRRL Y-65 / CBS 138) (Yeast).